The following is a 235-amino-acid chain: Uridylate kinase (235 aa).

An ATP-binding site is contributed by 9 to 12 (KLSG). The segment at 17–22 (GDQGYG) is involved in allosteric activation by GTP. Gly-51 is a UMP binding site. 2 residues coordinate ATP: Gly-52 and Arg-56. Residues Asp-71 and 132 to 139 (CGNPFFTT) contribute to the UMP site. Positions 159, 165, and 168 each coordinate ATP.

This sequence belongs to the UMP kinase family. As to quaternary structure, homohexamer.

The protein resides in the cytoplasm. The enzyme catalyses UMP + ATP = UDP + ADP. It participates in pyrimidine metabolism; CTP biosynthesis via de novo pathway; UDP from UMP (UMPK route): step 1/1. Allosterically activated by GTP. Inhibited by UTP. Its function is as follows. Catalyzes the reversible phosphorylation of UMP to UDP. This is Uridylate kinase from Synechococcus sp. (strain WH7803).